Reading from the N-terminus, the 178-residue chain is MSKKEEKVLINEEIVDLTDRVRLVDGEGEPKIVDSSKALEIAYNKGLDLVLVAPNANPPVAKVMDYGKYKYEQEKKKKEAKKKQVKIEVKEIKFTSKIQENDINYKVKHIKEFLEKGKHVKLRVFLRGRELATPEKGFEVINKVWDMISDVAEKQNEPKLEGNYINLLVTPIKKKIKK.

It belongs to the IF-3 family. In terms of assembly, monomer.

Its subcellular location is the cytoplasm. In terms of biological role, IF-3 binds to the 30S ribosomal subunit and shifts the equilibrium between 70S ribosomes and their 50S and 30S subunits in favor of the free subunits, thus enhancing the availability of 30S subunits on which protein synthesis initiation begins. In Nautilia profundicola (strain ATCC BAA-1463 / DSM 18972 / AmH), this protein is Translation initiation factor IF-3.